The following is a 408-amino-acid chain: Serine/threonine transporter SstT (408 aa).

The next 9 helical transmembrane spans lie at 19-39 (SLVSQIIVAIILASLLAVISP), 48-68 (LGSLFVNALKAVAPILVLVLV), 86-106 (IVGLYFLGTLSAALVAVLLSF), 143-163 (VTAVASGNFIAVLAWGLGLGF), 193-213 (FAPLGIFGLVANTIATTGFSA), 223-243 (VLLSAMLIIALLVNPLIVFII), 294-314 (IPLGATINMAGAAITITVLTL), 322-342 (IEVSFATAILLSVVASISACG), and 367-387 (VAMQVVAIGFIIGVIQDSAET).

This sequence belongs to the dicarboxylate/amino acid:cation symporter (DAACS) (TC 2.A.23) family.

The protein resides in the cell inner membrane. It catalyses the reaction L-serine(in) + Na(+)(in) = L-serine(out) + Na(+)(out). It carries out the reaction L-threonine(in) + Na(+)(in) = L-threonine(out) + Na(+)(out). Functionally, involved in the import of serine and threonine into the cell, with the concomitant import of sodium (symport system). In Colwellia psychrerythraea (strain 34H / ATCC BAA-681) (Vibrio psychroerythus), this protein is Serine/threonine transporter SstT.